We begin with the raw amino-acid sequence, 264 residues long: Purine nucleoside phosphorylase slr1573 (264 aa).

Residues His61, Cys104, and His121 each contribute to the Zn(2+) site.

It belongs to the purine nucleoside phosphorylase YfiH/LACC1 family. As to quaternary structure, homodimer. Cu(2+) is required as a cofactor. Requires Zn(2+) as cofactor.

It carries out the reaction adenosine + phosphate = alpha-D-ribose 1-phosphate + adenine. It catalyses the reaction S-methyl-5'-thioadenosine + phosphate = 5-(methylsulfanyl)-alpha-D-ribose 1-phosphate + adenine. The enzyme catalyses inosine + phosphate = alpha-D-ribose 1-phosphate + hypoxanthine. The catalysed reaction is adenosine + H2O + H(+) = inosine + NH4(+). In terms of biological role, purine nucleoside enzyme that catalyzes the phosphorolysis of adenosine and inosine nucleosides, yielding D-ribose 1-phosphate and the respective free bases, adenine and hypoxanthine. Also catalyzes the phosphorolysis of S-methyl-5'-thioadenosine into adenine and S-methyl-5-thio-alpha-D-ribose 1-phosphate. Also has adenosine deaminase activity. The protein is Purine nucleoside phosphorylase slr1573 of Synechocystis sp. (strain ATCC 27184 / PCC 6803 / Kazusa).